Consider the following 660-residue polypeptide: Leucine-rich repeat transmembrane protein FLRT2 (660 aa).

The N-terminal stretch at 1–35 (MGLQTAKWPSHGTFVLKFWLIMSLGLYSHVSKLLA) is a signal peptide. Cystine bridges form between C36–C42 and C40–C49. One can recognise an LRRNT domain in the interval 36–67 (CPSVCRCDRNFVYCNERSLTSVPLGIPEGVTV). At 36 to 540 (CPSVCRCDRN…QTTSHTMGSP (505 aa)) the chain is on the extracellular side. 10 LRR repeats span residues 62–87 (PEGV…LHNV), 88–108 (QSVH…MNLP), 109–131 (KNVR…ALAQ), 132–157 (LLKL…AFRE), 159–181 (ISLK…LPVD), 183–202 (QELR…AFQN), 203–228 (LTSL…TFSH), 229–251 (LTKL…DLPG), 252–274 (THLI…AFAN), and 275–298 (LRKL…VFDH). N-linked (GlcNAc...) asparagine glycosylation occurs at N202. 2 disulfides stabilise this stretch: C314–C339 and C316–C360. Residues 338 to 361 (MCQGPEQVRGMAVRELNMNLLSCP) enclose the LRRCT domain. Residues 372–396 (PAPSTVSPTTQSPTVSVPSPSRGSV) are compositionally biased toward low complexity. Residues 372-413 (PAPSTVSPTTQSPTVSVPSPSRGSVPPAPAPSKLPTIPDWDG) are disordered. In terms of domain architecture, Fibronectin type-III spans 419–517 (PPISERIQLS…ICSEATTHAS (99 aa)). A helical membrane pass occupies residues 541 to 561 (FLLAGLIGGAVIFVLVVLLSV). Topologically, residues 562 to 660 (FCWHMHKKGR…SVPDLEHCHT (99 aa)) are cytoplasmic.

In terms of assembly, self-associates (via leucine-rich repeats), giving rise to homooligomers. Interacts with FGFR1. Interacts with FGFR2. Interacts (via extracellular domain) with ADGRL1/LPHN1. Interacts (via extracellular domain) with ADGRL3 (via olfactomedin-like domain). Interacts (via extracellular domain) with UNC5D (via the first Ig-like domain). Can also interact (via extracellular domain) with UNC5B, but with much lower affinity. Interacts (via extracellular domain) with FN1. In terms of processing, N-glycosylated. Post-translationally, proteolytic cleavage in the juxtamembrane region gives rise to a soluble ectodomain. Cleavage is probably effected by a metalloprotease. In terms of tissue distribution, detected in brain (at protein level).

It is found in the cell membrane. Its subcellular location is the endoplasmic reticulum membrane. It localises to the synapse. The protein localises to the synaptosome. The protein resides in the cell junction. It is found in the focal adhesion. Its subcellular location is the secreted. It localises to the extracellular space. The protein localises to the extracellular matrix. The protein resides in the microsome membrane. Its function is as follows. Functions in cell-cell adhesion, cell migration and axon guidance. Mediates cell-cell adhesion via its interactions with ADGRL3 and probably also other latrophilins that are expressed at the surface of adjacent cells. May play a role in the migration of cortical neurons during brain development via its interaction with UNC5D. Mediates axon growth cone collapse and plays a repulsive role in neuron guidance via its interaction with UNC5D, and possibly also other UNC-5 family members. Plays a role in fibroblast growth factor-mediated signaling cascades. Required for normal organization of the cardiac basement membrane during embryogenesis, and for normal embryonic epicardium and heart morphogenesis. This chain is Leucine-rich repeat transmembrane protein FLRT2, found in Rattus norvegicus (Rat).